We begin with the raw amino-acid sequence, 225 residues long: Iron-sulfur flavoprotein CD630_04720 (225 aa).

C49, C52, C55, and C61 together coordinate [4Fe-4S] cluster.

Belongs to the SsuE family. Isf subfamily. In terms of assembly, homodimer. It depends on FMN as a cofactor. The cofactor is [4Fe-4S] cluster.

Redox-active protein probably involved in electron transport. The chain is Iron-sulfur flavoprotein CD630_04720 from Clostridioides difficile (strain 630) (Peptoclostridium difficile).